The sequence spans 156 residues: Small ribosomal subunit protein uS7 (156 aa).

Belongs to the universal ribosomal protein uS7 family. Part of the 30S ribosomal subunit. Contacts proteins S9 and S11.

In terms of biological role, one of the primary rRNA binding proteins, it binds directly to 16S rRNA where it nucleates assembly of the head domain of the 30S subunit. Is located at the subunit interface close to the decoding center, probably blocks exit of the E-site tRNA. The protein is Small ribosomal subunit protein uS7 of Bifidobacterium longum (strain NCC 2705).